Reading from the N-terminus, the 152-residue chain is Transcription factor ATOH7 (152 aa).

The bHLH domain maps to 40–92 (RRRLAANARERRRMQGLNTAFDRLRRVVPQWGQDKKLSKYETLQMALSYIMAL).

In terms of assembly, forms a heterodimer with TCF3 isoform E47; interaction may be required for DNA-binding in certain situations.

It localises to the nucleus. The protein localises to the perikaryon. Its subcellular location is the cell projection. It is found in the axon. Functionally, transcription factor that binds to DNA at the consensus sequence 5'-CAG[GC]TG-3'. Dimerization with TCF3 isoform E47 may be required in certain situations. Binds to gene promoters and enhancer elements, and thereby regulates a transcriptional program of retinal ganglion cell (RGC) determinant genes. Although the exact mechanism is not certain, retinal transcription regulation by ATOH7 has a role in RGC determination and survival, photoreceptor population development, targeting of RGC axons to the optic nerve and development of the retino-hypothalamic tract. Binds to its own promoter and enhancer sequences, suggesting autoregulation of ATOH7 transcription. Required for retinal circadian rhythm photoentrainment. Plays a role in brainstem auditory signaling and binaural processing. The sequence is that of Transcription factor ATOH7 from Homo sapiens (Human).